Consider the following 354-residue polypeptide: MISLKNDTFLRALLKQPVEYTPIWMMRQAGRYLPEYKATRAKAGSFLDLCKNTELATEVTIQPLERFDLDAAILFSDILTVPDAMGLGLYFAEGEGPKFKRALQHEADIAKLHVPDMEKLQYVFDAVTSIRKALDGRVPLIGFSGSPFTLACYMVEGGGSKEFRTIKTMMYSRPDLLHKILDTNAQAVTAYLNAQIDAGAQAVQIFDTWGGVLSDAAFKEFSLKYIRQIVAGLKRESEGRRVPVIVFAKGGGLWLESMAQIGADALGLDWTCNIGEARRRVGKQVALQGNFDPFALFGTPESIRTEVARILADYGHGSGHVFNLGHGINQHADPEHAKILVDTVHELSRQYHGG.

Substrate is bound by residues 27–31 (RQAGR), phenylalanine 46, aspartate 77, tyrosine 153, threonine 208, and histidine 326.

The protein belongs to the uroporphyrinogen decarboxylase family. Homodimer.

The protein resides in the cytoplasm. The catalysed reaction is uroporphyrinogen III + 4 H(+) = coproporphyrinogen III + 4 CO2. It functions in the pathway porphyrin-containing compound metabolism; protoporphyrin-IX biosynthesis; coproporphyrinogen-III from 5-aminolevulinate: step 4/4. Its function is as follows. Catalyzes the decarboxylation of four acetate groups of uroporphyrinogen-III to yield coproporphyrinogen-III. The sequence is that of Uroporphyrinogen decarboxylase from Neisseria meningitidis serogroup B (strain ATCC BAA-335 / MC58).